Reading from the N-terminus, the 119-residue chain is Large ribosomal subunit protein bL20 (119 aa).

Belongs to the bacterial ribosomal protein bL20 family.

Its function is as follows. Binds directly to 23S ribosomal RNA and is necessary for the in vitro assembly process of the 50S ribosomal subunit. It is not involved in the protein synthesizing functions of that subunit. The chain is Large ribosomal subunit protein bL20 from Nitrobacter hamburgensis (strain DSM 10229 / NCIMB 13809 / X14).